The following is a 492-amino-acid chain: MAHIDRINILANHLSKEEEEENELLTSPVSADKKKETVTVTDNRNGKSYDFKIKNDTINALNFKELQLAKGDGGLMIYDPGFQNTAVVTSYITYIDGDKGILRYRGYPIEELAERSNFLEVAYLLINGNLPNKSQLDGWSNKIMTHTFLHENLVGLMKTFRYDAHPMGMLISTVAALGTFYPEANPALAGGDIFKSENVRNKQIYRIVGKLPTIAACAWRHRIGRPYNTPVNHLGYTENFLYMLDKLSEPDYKPNPVLCRALEILFILHADHELNCSTAAMRHISSSGTDPYTSVAGAAGALYGPSHGGANEAVLDMLIHIGSKENIPQFISDVKSKKKKLMGFGHRIYKNYDPRAKIIRRVAYEVFESLGKEPLIEVATELEKQALEDEYFVSRKLYPNVDFYSGLIYKAMGFPTDMFPVLFTIPRAVGWLAHWVEHLEDPETKIYRPRQVYKGEWFRNYVPIDGRPPAKVRSQDSYSSATTKRYSKVTSH.

Active-site residues include histidine 307, histidine 346, and aspartate 402. The interval 469–492 (PAKVRSQDSYSSATTKRYSKVTSH) is disordered. The segment covering 475–484 (QDSYSSATTK) has biased composition (polar residues).

Belongs to the citrate synthase family.

Its subcellular location is the peroxisome. The enzyme catalyses oxaloacetate + acetyl-CoA + H2O = citrate + CoA + H(+). Its pathway is carbohydrate metabolism; tricarboxylic acid cycle; isocitrate from oxaloacetate: step 1/2. In terms of biological role, peroxisomal protein involved in the cellular biosynthesis of citrate, and required primarily for cell growth and modulation of multicellular development. The protein is Citrate synthase, peroxisomal (cshA) of Dictyostelium discoideum (Social amoeba).